The primary structure comprises 163 residues: Protein NAG1 (163 aa).

The helical transmembrane segment at Ala-76 to Met-96 threads the bilayer.

The protein localises to the membrane. Functionally, involved in yeast cell wall biogenesis. This chain is Protein NAG1 (NAG1), found in Saccharomyces cerevisiae (strain ATCC 204508 / S288c) (Baker's yeast).